The chain runs to 63 residues: uncharacterized protein (63 aa).

This is an uncharacterized protein from Escherichia coli (strain K12).